We begin with the raw amino-acid sequence, 819 residues long: Hypoxia-inducible factor 1-alpha (819 aa).

A disordered region spans residues Met1 to Arg31. An interaction with TSGA10 region spans residues Met1 to Ala402. Residues Gly7–Arg31 show a composition bias toward basic and acidic residues. One can recognise a bHLH domain in the interval Arg18–Arg71. The segment at Lys22–Arg31 is DNA-binding. One can recognise a PAS 1 domain in the interval Lys86 to Gly159. Residues Arg171–Val192 form a required for heterodimer formation with ARNT region. The region spanning Pro229–Gly299 is the PAS 2 domain. Ser248 bears the Phosphoserine; by CK1 mark. Residues Thr303–Ile346 enclose the PAC domain. The ODD stretch occupies residues Ala402–Gln599. Pro403 carries the post-translational modification 4-hydroxyproline. Polar residues predominate over residues Ile495–Ser518. The segment at Ile495–Cys521 is disordered. Residues Phe532–Arg576 are NTAD. N6-acetyllysine; alternate is present on Lys533. Residue Lys533 forms a Glycyl lysine isopeptide (Lys-Gly) (interchain with G-Cter in ubiquitin); alternate linkage. Residues Lys539 and Lys548 each participate in a glycyl lysine isopeptide (Lys-Gly) (interchain with G-Cter in ubiquitin) cross-link. Residue Ser552 is modified to Phosphoserine; by GSK3-beta. Residue Thr556 is modified to Phosphothreonine; by GSK3-beta. 4-hydroxyproline is present on Pro565. Ser577 is modified (phosphoserine; by PLK3). Residues Ser577–Gln778 form an ID region. The segment at Leu581–Ser685 is disordered. Residues Ser582–Thr613 are compositionally biased toward low complexity. Over residues Glu614–Lys628 the composition is skewed to basic and acidic residues. A compositionally biased stretch (low complexity) spans Thr632–Thr655. At Ser650 the chain carries Phosphoserine; by PLK3. Lys702 is modified (N6-acetyllysine). A Nuclear localization signal motif is present at residues Arg711 to His717. The CTAD stretch occupies residues Ser779–Asn819. Cys793 is modified (S-nitrosocysteine). (3S)-3-hydroxyasparagine is present on Asn796.

Interacts with the ARNT; forms a heterodimer that binds core DNA sequence 5'-TACGTG-3' within the hypoxia response element (HRE) of target gene promoters. Interacts with COPS5; the interaction increases the transcriptional activity of HIF1A through increased stability. Interacts with EP300 (via TAZ-type 1 domains); the interaction is stimulated in response to hypoxia and inhibited by CITED2. Interacts with CREBBP (via TAZ-type 1 domains). Interacts with NCOA1, NCOA2, APEX1 and HSP90. Interacts (hydroxylated within the ODD domain) with VHLL (via beta domain); the interaction, leads to polyubiquitination and subsequent HIF1A proteasomal degradation. During hypoxia, sumoylated HIF1A also binds VHL; the interaction promotes the ubiquitination of HIF1A. Interacts with SENP1; the interaction desumoylates HIF1A resulting in stabilization and activation of transcription. Interacts (via the ODD domain) with NAA10; the interaction appears not to acetylate HIF1A nor have any affect on protein stability, during hypoxia. Interacts with RWDD3; the interaction enhances HIF1A sumoylation. Interacts with TSGA10. Interacts with HIF3A. Interacts with RORA (via the DNA binding domain); the interaction enhances HIF1A transcription under hypoxia through increasing protein stability. Interaction with PSMA7 inhibits the transactivation activity of HIF1A under both normoxic and hypoxia-mimicking conditions. Interacts with USP20. Interacts with RACK1; promotes HIF1A ubiquitination and proteasome-mediated degradation. Interacts (via N-terminus) with USP19. Interacts with SIRT2. Interacts (deacetylated form) with EGLN1. Interacts with CBFA2T3. Interacts with HSP90AA1 and HSP90AB1. Interacts with DCUN1D1; this interaction increases the interaction between VHL and DCUN1D1. Interacts with HIF1AN. S-nitrosylation of Cys-793 may be responsible for increased recruitment of p300 coactivator necessary for transcriptional activity of HIF-1 complex. Post-translationally, acetylation of Lys-533 by ARD1 increases interaction with VHL and stimulates subsequent proteasomal degradation. Deacetylation of Lys-702 by SIRT2 increases its interaction with and hydroxylation by EGLN1 thereby inactivating HIF1A activity by inducing its proteasomal degradation. In terms of processing, requires phosphorylation for DNA-binding. Phosphorylation at Ser-248 by CSNK1D/CK1 represses kinase activity and impairs ARNT binding. Phosphorylation by GSK3-beta and PLK3 promote degradation by the proteasome. The iron and 2-oxoglutarate dependent 3-hydroxylation of asparagine is (S) stereospecific within HIF CTAD domains. Post-translationally, sumoylated; with SUMO1 under hypoxia. Sumoylation is enhanced through interaction with RWDD3. Both sumoylation and desumoylation seem to be involved in the regulation of its stability during hypoxia. Sumoylation can promote either its stabilization or its VHL-dependent degradation by promoting hydroxyproline-independent HIF1A-VHL complex binding, thus leading to HIF1A ubiquitination and proteasomal degradation. Desumoylation by SENP1 increases its stability amd transcriptional activity. There is a disaccord between various publications on the effect of sumoylation and desumoylation on its stability and transcriptional activity. In terms of processing, in normoxia, is hydroxylated on Pro-403 and Pro-565 in the oxygen-dependent degradation domain (ODD) by EGLN1/PHD2 and EGLN2/PHD1. EGLN3/PHD3 has also been shown to hydroxylate Pro-565. The hydroxylated prolines promote interaction with VHL, initiating rapid ubiquitination and subsequent proteasomal degradation. Deubiquitinated by USP20. Under hypoxia, proline hydroxylation is impaired and ubiquitination is attenuated, resulting in stabilization. In normoxia, is hydroxylated on Asn-796 by HIF1AN, thus abrogating interaction with CREBBP and EP300 and preventing transcriptional activation. Repressed by iron ion, via Fe(2+) prolyl hydroxylase (PHD) enzymes-mediated hydroxylation and subsequent proteasomal degradation.

The protein localises to the cytoplasm. Its subcellular location is the nucleus. The protein resides in the nucleus speckle. Induced by reactive oxygen species (ROS). In terms of biological role, functions as a master transcriptional regulator of the adaptive response to hypoxia. Under hypoxic conditions, activates the transcription of over 40 genes, including erythropoietin, glucose transporters, glycolytic enzymes, vascular endothelial growth factor, HILPDA, and other genes whose protein products increase oxygen delivery or facilitate metabolic adaptation to hypoxia. Plays an essential role in embryonic vascularization, tumor angiogenesis and pathophysiology of ischemic disease. Heterodimerizes with ARNT; heterodimer binds to core DNA sequence 5'-TACGTG-3' within the hypoxia response element (HRE) of target gene promoters. Activation requires recruitment of transcriptional coactivators such as CREBBP and EP300. Activity is enhanced by interaction with NCOA1 and/or NCOA2. Interaction with redox regulatory protein APEX1 seems to activate CTAD and potentiates activation by NCOA1 and CREBBP. Involved in the axonal distribution and transport of mitochondria in neurons during hypoxia. In Eospalax fontanierii baileyi (Plateau zokor), this protein is Hypoxia-inducible factor 1-alpha (HIF1A).